The chain runs to 702 residues: MA3 DOMAIN-CONTAINING TRANSLATION REGULATORY FACTOR 3 (702 aa).

The tract at residues 1-100 (MEGFLTDQQR…PNDPNYDSGE (100 aa)) is disordered. Over residues 53 to 65 (VKHRRSHAGRSIR) the composition is skewed to basic residues. Positions 81 to 91 (IDTDGDYHIDP) are enriched in basic and acidic residues. The MI 1 domain occupies 116–237 (DYKKAAASII…PPAFLPRAAK (122 aa)). A Nuclear localization signal 1 motif is present at residues 267 to 274 (ERRWGGQT). MI domains lie at 280–401 (EVKK…PSGE), 414–535 (RFKE…EISS), and 577–697 (DAKD…SLTE). The Nuclear localization signal 2 signature appears at 615 to 622 (VKKALVMG).

This sequence belongs to the PDCD4 family. Interacts with EIN2, ETR2 and EIN4. Binds to EIF4A1. The association with ribosomes is modulated by cellular energy status and TOR activity. Mostly expressed in vegetative tissues, such as leaves and stems, and, to a lower extent, in roots and reproductive tissues, such as flower buds and flowers. Expressed in seedlings, roots, cauline leaf tips and flowers.

The protein localises to the nucleus. It is found in the cytoplasm. Its subcellular location is the cytosol. Involved in target of rapamycin (TOR)-regulated translation control, especially under energy-deficient conditions. Involved in the regulation of the ethylene-mediated signaling pathway. Involved in salt stress responses. Reduced cotyledons size and early flowering. In Arabidopsis thaliana (Mouse-ear cress), this protein is MA3 DOMAIN-CONTAINING TRANSLATION REGULATORY FACTOR 3.